We begin with the raw amino-acid sequence, 257 residues long: Snake venom serine protease Haly-2 (257 aa).

The N-terminal stretch at methionine 1 to alanine 18 is a signal peptide. A propeptide spanning residues glutamine 19–leucine 24 is cleaved from the precursor. One can recognise a Peptidase S1 domain in the interval isoleucine 25 to alanine 248. 6 disulfides stabilise this stretch: cysteine 31-cysteine 162, cysteine 49-cysteine 65, cysteine 97-cysteine 255, cysteine 141-cysteine 209, cysteine 173-cysteine 188, and cysteine 199-cysteine 224. Histidine 64 acts as the Charge relay system in catalysis. N-linked (GlcNAc...) asparagine glycosylation is present at asparagine 100. The active-site Charge relay system is the aspartate 109. Residue serine 203 is the Charge relay system of the active site.

The protein belongs to the peptidase S1 family. Snake venom subfamily. As to quaternary structure, monomer. Expressed by the venom gland.

The protein resides in the secreted. In terms of biological role, snake venom serine protease that may act in the hemostasis system of the prey. In Gloydius brevicauda (Korean slamosa snake), this protein is Snake venom serine protease Haly-2.